We begin with the raw amino-acid sequence, 439 residues long: Glutamine synthetase (439 aa).

Residues arginine 12–lysine 93 form the GS beta-grasp domain. A GS catalytic domain is found at proline 99–isoleucine 439. Mg(2+) is bound by residues glutamate 122 and glutamate 124. An ATP-binding site is contributed by glutamate 172. 2 residues coordinate Mg(2+): glutamate 177 and glutamate 184. Glycine 229 is a binding site for L-glutamate. A Mg(2+)-binding site is contributed by histidine 233. ATP contacts are provided by residues histidine 235–serine 237 and serine 237. L-glutamate is bound by residues arginine 283, glutamate 289, and arginine 301. ATP-binding residues include arginine 301 and arginine 306. Position 318 (glutamate 318) interacts with Mg(2+). Arginine 320 is a binding site for L-glutamate.

The protein belongs to the glutamine synthetase family. In terms of assembly, oligomer of 12 subunits arranged in the form of two hexagons. Mg(2+) is required as a cofactor.

The protein localises to the cytoplasm. It catalyses the reaction L-glutamate + NH4(+) + ATP = L-glutamine + ADP + phosphate + H(+). In terms of biological role, probably involved in nitrogen metabolism via ammonium assimilation. Catalyzes the ATP-dependent biosynthesis of glutamine from glutamate and ammonia. The sequence is that of Glutamine synthetase from Pyrococcus abyssi (strain GE5 / Orsay).